We begin with the raw amino-acid sequence, 172 residues long: S-ribosylhomocysteine lyase (172 aa).

The Fe cation site is built by His54, His58, and Cys128.

This sequence belongs to the LuxS family. Homodimer. Fe cation is required as a cofactor.

The catalysed reaction is S-(5-deoxy-D-ribos-5-yl)-L-homocysteine = (S)-4,5-dihydroxypentane-2,3-dione + L-homocysteine. Involved in the synthesis of autoinducer 2 (AI-2) which is secreted by bacteria and is used to communicate both the cell density and the metabolic potential of the environment. The regulation of gene expression in response to changes in cell density is called quorum sensing. Catalyzes the transformation of S-ribosylhomocysteine (RHC) to homocysteine (HC) and 4,5-dihydroxy-2,3-pentadione (DPD). This Vibrio parahaemolyticus serotype O3:K6 (strain RIMD 2210633) protein is S-ribosylhomocysteine lyase.